The sequence spans 446 residues: Trigger factor (446 aa).

The PPIase FKBP-type domain maps to Gly161 to Pro246. The interval Val422–Glu446 is disordered. The span at Gln437 to Glu446 shows a compositional bias: acidic residues.

The protein belongs to the FKBP-type PPIase family. Tig subfamily.

It is found in the cytoplasm. The enzyme catalyses [protein]-peptidylproline (omega=180) = [protein]-peptidylproline (omega=0). In terms of biological role, involved in protein export. Acts as a chaperone by maintaining the newly synthesized protein in an open conformation. Functions as a peptidyl-prolyl cis-trans isomerase. The polypeptide is Trigger factor (Hahella chejuensis (strain KCTC 2396)).